An 864-amino-acid polypeptide reads, in one-letter code: Ribosome biogenesis protein ERB1 (864 aa).

Basic and acidic residues predominate over residues 1–52 (MAVDKGRRPVPPERRAQGRKRAEPGDVTIRETRTRPVHTPEPEPELLAKDGI). 2 disordered regions span residues 1–153 (MAVD…VKEG) and 191–231 (ESRN…STED). Residues 53 to 71 (LELEDDDDNDDDDDDDDDD) show a composition bias toward acidic residues. Residues 72-83 (KSNHHDGAPKNE) are compositionally biased toward basic and acidic residues. Residues 100–135 (DDGDEDEEEDDEDEDEDASDDEAFDSDDLENWDEEA) are compositionally biased toward acidic residues. WD repeat units lie at residues 509–549 (AHAP…CVAT), 559–599 (ADRS…KTMY), 694–732 (NSAMAVQCVCFHPSRPWLFVATQRYVRVYDLVQQSLVKT), 735–774 (PGVRWISSLDVHPSGDHVIIGSYDRRVLWFDLDLSERPYK), 778–817 (YHSRAVRAVAYHPRFPLFASAADDGTVHVYHGTVYSDLLQ), and 833–864 (QDALGVLSIAWHPTLPWLVSAGADGDARLWTP).

Belongs to the WD repeat BOP1/ERB1 family. In terms of assembly, component of the NOP7 complex, composed of ERB1, NOP7 and YTM1. The complex is held together by ERB1, which interacts with NOP7 via its N-terminal domain and with YTM1 via a high-affinity interaction between the seven-bladed beta-propeller domains of the 2 proteins. The NOP7 complex associates with the 66S pre-ribosome.

It localises to the nucleus. Its subcellular location is the nucleolus. The protein localises to the nucleoplasm. In terms of biological role, component of the NOP7 complex, which is required for maturation of the 25S and 5.8S ribosomal RNAs and formation of the 60S ribosome. This chain is Ribosome biogenesis protein ERB1, found in Malassezia globosa (strain ATCC MYA-4612 / CBS 7966) (Dandruff-associated fungus).